We begin with the raw amino-acid sequence, 254 residues long: Switch-activating protein 1 (254 aa).

Residues 1–10 (MEAPKMELKS) are compositionally biased toward basic and acidic residues. The disordered stretch occupies residues 1-30 (MEAPKMELKSYKRKNASLSPSSSPAKAQRT). Residues 16–25 (ASLSPSSSPA) are compositionally biased toward low complexity. A phosphoserine mark is found at S17 and S19. Repeat copies occupy residues 221 to 224 (GVNM), 225 to 228 (GTNM), 229 to 232 (GANM), and 233 to 236 (GANM). Residues 221-236 (GVNMGTNMGANMGANM) are 4 X 4 AA tandem repeats of G-[ATV]-N-M.

As to quaternary structure, homodimer.

It localises to the nucleus. Binds to sequences required for mating-type switching. Makes a simultaneous contact with both the alpha and beta domains of the switch-activating site SAS1. Also binds to replication fork barrier 1 (RFB1) located within a 78 base pair sequence near the 3' end of the rRNA coding region. This leads to replication fork blockage. It binds the consensus sequence 5'-TA[AG]GCAGNTN[CT]AACG[AC]G-3'. Functionally, has a role in chromosome organization and integrity where it is involved in chromosome segregation. Has a role in sister chromatid cohesion and condensation. This is Switch-activating protein 1 (sap1) from Schizosaccharomyces pombe (strain 972 / ATCC 24843) (Fission yeast).